The following is a 393-amino-acid chain: Aspartate aminotransferase (393 aa).

L-aspartate is bound by residues G38, W124, and N174. Position 237 is an N6-(pyridoxal phosphate)lysine (K237).

The protein belongs to the class-I pyridoxal-phosphate-dependent aminotransferase family. As to quaternary structure, homodimer. It depends on pyridoxal 5'-phosphate as a cofactor.

The protein resides in the cytoplasm. The enzyme catalyses L-aspartate + 2-oxoglutarate = oxaloacetate + L-glutamate. In Bacillus subtilis (strain 168), this protein is Aspartate aminotransferase (aspB).